The sequence spans 641 residues: Calpain-6 (641 aa).

The Calpain catalytic domain occupies Leu26–Val343. A domain III region spans residues Asn344–Arg495. A C2 domain is found at Thr498–Ala621.

This sequence belongs to the peptidase C2 family. In terms of assembly, interacts (via domain III) with microtubules. Interacts (via domain II) with ARHGEF2 (via the N-terminal zinc finger). In terms of tissue distribution, expressed only in placenta.

The protein resides in the cytoplasm. It localises to the perinuclear region. It is found in the cytoskeleton. Its subcellular location is the spindle. Microtubule-stabilizing protein that may be involved in the regulation of microtubule dynamics and cytoskeletal organization. May act as a regulator of RAC1 activity through interaction with ARHGEF2 to control lamellipodial formation and cell mobility. Does not seem to have protease activity as it has lost the active site residues. The chain is Calpain-6 (CAPN6) from Homo sapiens (Human).